The sequence spans 278 residues: Urease accessory protein UreD (278 aa).

It belongs to the UreD family. In terms of assembly, ureD, UreF and UreG form a complex that acts as a GTP-hydrolysis-dependent molecular chaperone, activating the urease apoprotein by helping to assemble the nickel containing metallocenter of UreC. The UreE protein probably delivers the nickel.

Its subcellular location is the cytoplasm. In terms of biological role, required for maturation of urease via the functional incorporation of the urease nickel metallocenter. This Staphylococcus aureus (strain bovine RF122 / ET3-1) protein is Urease accessory protein UreD.